Here is a 1760-residue protein sequence, read N- to C-terminus: Chitin synthase A (1760 aa).

N-linked (GlcNAc...) asparagine glycosylation is present at asparagine 157. A run of 2 helical transmembrane segments spans residues 729–749 (IWTGFVWALTFWIPSFVLRFV) and 765–785 (LVLVFLILLFNAIVCFYIIAF). N-linked (GlcNAc...) asparagine glycosylation is found at asparagine 876 and asparagine 996. The chain crosses the membrane as a helical span at residues 1027–1047 (ILLAFTCLICAVILVKFLAAL). An N-linked (GlcNAc...) asparagine glycan is attached at asparagine 1392. The next 3 membrane-spanning stretches (helical) occupy residues 1417–1437 (FVVLVDLLGTIILPATCVYLG), 1449–1469 (IPIISIAILAGVYGLQAIIFI), and 1477–1497 (IGWMIIYICAYPIYSFVLPMY). N-linked (GlcNAc...) asparagine glycosylation is found at asparagine 1557, asparagine 1645, and asparagine 1650. Positions 1670 to 1691 (DNLLGVPRPNSRSPVGGYTSRP) are disordered. Positions 1702-1758 (GPDEMAITDAIRSCLAEVDLDTVTKKQVRALVEQRLQATLTGDKRAFLDRQIDQELA) constitute a DEK-C domain.

It belongs to the chitin synthase family. Class V subfamily.

Its subcellular location is the cell membrane. It carries out the reaction [(1-&gt;4)-N-acetyl-beta-D-glucosaminyl](n) + UDP-N-acetyl-alpha-D-glucosamine = [(1-&gt;4)-N-acetyl-beta-D-glucosaminyl](n+1) + UDP + H(+). In terms of biological role, polymerizes chitin, a structural polymer of the cell wall and septum, by transferring the sugar moiety of UDP-GlcNAc to the non-reducing end of the growing chitin polymer. Plays an important role in cell-wall formation during both hyphal growth and conidiation. In Aspergillus oryzae (strain ATCC 42149 / RIB 40) (Yellow koji mold), this protein is Chitin synthase A.